The sequence spans 454 residues: F-box/WD-40 repeat-containing protein At3g52030 (454 aa).

The 47-residue stretch at 20–66 (PTSIESLDADILCIIFSFLDLFDLVHCTVVCNSWNAVIKRLKLLQAS) folds into the F-box domain. 8 WD repeats span residues 85 to 116 (DRPA…RWEA), 117 to 153 (HSHR…CMEE), 170 to 214 (SKKL…SIFP), 215 to 255 (SRAG…CSQI), 258 to 296 (TQGG…PVAT), 301 to 340 (ITAG…RLWE), 343 to 383 (VSPN…VLSR), and 422 to 454 (KVRP…FNLS).

This Arabidopsis thaliana (Mouse-ear cress) protein is F-box/WD-40 repeat-containing protein At3g52030.